We begin with the raw amino-acid sequence, 376 residues long: Cysteine proteinase 2 (376 aa).

The first 18 residues, 1–18 (MRLLVFLILLIFVNFSFA), serve as a signal peptide directing secretion. The propeptide at 19–122 (NVRPNGRRFS…EVLNVEDLQT (104 aa)) is activation peptide. Disulfide bonds link cysteine 144-cysteine 187, cysteine 178-cysteine 221, and cysteine 279-cysteine 365. The active site involves cysteine 147. Catalysis depends on residues histidine 286 and asparagine 343.

The protein belongs to the peptidase C1 family.

The protein localises to the lysosome. Functionally, cysteine proteinases 1 and 2 are believed to participate in the breakdown of protein during differentiation of Dictyostelium as a response to starvation. The sequence is that of Cysteine proteinase 2 (cprB) from Dictyostelium discoideum (Social amoeba).